The primary structure comprises 372 residues: Actin-related protein 2/3 complex subunit 1B (372 aa).

WD repeat units follow at residues 6–45 (FLVEPISCHAWNKDRTQIAICPNNHEVHIYEKSGNKWVQV), 50–89 (EHNGQVTGIDWAPDSNRIVTCGTDRNAYVWTLKGRTWKPT), 94–135 (RINR…WVCK), 140–179 (PIRSTVLSLDWHPNSVLLAAGSCDFKCRIFSAYIKEVEER), 242–280 (SETLPLLAVTFITESSLVAAGHDCFPVLFTYDSAAGKLS), and 324–367 (LHKN…SALK).

This sequence belongs to the WD repeat ARPC1 family. Component of the Arp2/3 complex composed of ACTR2/ARP2, ACTR3/ARP3, ARPC1B/p41-ARC, ARPC2/p34-ARC, ARPC3/p21-ARC, ARPC4/p20-ARC and ARPC5/p16-ARC.

The protein localises to the cytoplasm. Its subcellular location is the cytoskeleton. The protein resides in the nucleus. Functionally, component of the Arp2/3 complex, a multiprotein complex that mediates actin polymerization upon stimulation by nucleation-promoting factor (NPF). The Arp2/3 complex mediates the formation of branched actin networks in the cytoplasm, providing the force for cell motility. In addition to its role in the cytoplasmic cytoskeleton, the Arp2/3 complex also promotes actin polymerization in the nucleus, thereby regulating gene transcription and repair of damaged DNA. The Arp2/3 complex promotes homologous recombination (HR) repair in response to DNA damage by promoting nuclear actin polymerization, leading to drive motility of double-strand breaks (DSBs). This is Actin-related protein 2/3 complex subunit 1B (ARPC1B) from Bos taurus (Bovine).